We begin with the raw amino-acid sequence, 171 residues long: Disulfide bond formation protein B (171 aa).

Topologically, residues Met-1–Val-8 are cytoplasmic. A helical membrane pass occupies residues Ser-9–Tyr-25. At Leu-26–Val-43 the chain is on the periplasmic side. Cys-35 and Cys-38 are disulfide-bonded. Residues Gly-44–Pro-60 form a helical membrane-spanning segment. Residues Val-61–Arg-67 lie on the Cytoplasmic side of the membrane. Residues Val-68–Ile-85 form a helical membrane-spanning segment. Over Arg-86–Val-142 the chain is Periplasmic. A disulfide bridge links Cys-101 with Cys-128. The chain crosses the membrane as a helical span at residues Trp-143–Arg-161. Over Arg-162–Lys-171 the chain is Cytoplasmic.

Belongs to the DsbB family.

The protein localises to the cell inner membrane. Its function is as follows. Required for disulfide bond formation in some periplasmic proteins. Acts by oxidizing the DsbA protein. The polypeptide is Disulfide bond formation protein B (Acinetobacter baylyi (strain ATCC 33305 / BD413 / ADP1)).